The chain runs to 146 residues: Hemoglobin subunit beta-2 (146 aa).

The Globin domain maps to 2–146 (HWTAEEKQLI…VAHALARRYH (145 aa)). Heme b contacts are provided by H63 and H92.

Belongs to the globin family. In terms of assembly, heterotetramer of two alpha chains and two beta chains. In terms of tissue distribution, red blood cells.

Functionally, involved in oxygen transport from the lung to the various peripheral tissues. The sequence is that of Hemoglobin subunit beta-2 from Iguana iguana (Common iguana).